The following is a 668-amino-acid chain: Ubiquitin ligase complex F-box protein UFO1 (668 aa).

The F-box domain maps to 5–51 (GLVLQDLPPEILINIFSHLDEKDLFTLQELSTHFRNLIHDEELWKNL). Serine 511 carries the phosphoserine modification. Threonine 514 carries the phosphothreonine modification. 3 UIM domains span residues 547–566 (DEDE…YETQ), 583–602 (EDDE…DERR), and 651–668 (NVDE…SEIN). Residues 564–578 (ETQTNSSANHGNNTN) show a composition bias toward polar residues. 2 disordered regions span residues 564 to 585 (ETQT…DEDD) and 599 to 639 (DERR…TENT).

As to quaternary structure, interacts with SKP1. Component of the probable SCF(UFO1) complex containing CDC53, SKP1, RBX1 and UFO1.

It functions in the pathway protein modification; protein ubiquitination. Functionally, substrate recognition component of a SCF (SKP1-CUL1-F-box protein) E3 ubiquitin-protein ligase complex which mediates the ubiquitination and subsequent proteasomal degradation of target proteins. Probably recognizes and binds to phosphorylated target proteins. This is Ubiquitin ligase complex F-box protein UFO1 (UFO1) from Saccharomyces cerevisiae (strain ATCC 204508 / S288c) (Baker's yeast).